Here is a 327-residue protein sequence, read N- to C-terminus: Glutamyl endopeptidase (327 aa).

Residues Met1–Ala29 form the signal peptide. A propeptide spanning residues Leu30 to Asn68 is cleaved from the precursor. The interval Lys33 to Leu61 is disordered. The span at Gln40–Lys54 shows a compositional bias: low complexity. Catalysis depends on charge relay system residues His119, Asp161, and Ser237. A disordered region spans residues Phe283 to Ala327. Low complexity predominate over residues Asp286–Ala327. 9 repeat units span residues Pro289–Asn291, Pro292–Asn294, Pro295–Asn297, Pro298–Asn300, Pro301–Asn303, Pro304–Asn306, Pro307–Asn309, Pro310–Asn312, and Pro313–Asn315. The 9 X 3 AA repeats of P-[DN]-N stretch occupies residues Pro289–Asn315.

It belongs to the peptidase S1B family. Proteolytically cleaved by aureolysin (aur). This cleavage leads to the activation of SspA.

Its subcellular location is the secreted. It catalyses the reaction Preferential cleavage: Glu-|-Xaa, Asp-|-Xaa.. Its function is as follows. Preferentially cleaves peptide bonds on the carboxyl-terminal side of aspartate and glutamate. Along with other extracellular proteases it is involved in colonization and infection of human tissues. Required for proteolytic maturation of thiol protease SspB and inactivation of SspC, an inhibitor of SspB. It is the most important protease for degradation of fibronectin-binding protein (FnBP) and surface protein A, which are involved in adherence to host cells. May also protect bacteria against host defense mechanism by cleaving the immunoglobulin classes IgG, IgA and IgM. May be involved in the stability of secreted lipases. This is Glutamyl endopeptidase (sspA) from Staphylococcus aureus (strain MW2).